Here is a 218-residue protein sequence, read N- to C-terminus: MPMTLGYWDIRGLAHAIRLFLEYTDSSYEEKRYTMGDAPDYDQSQWLNEKFKLGLDFPNLPYLIDGSHKITQSNAILRYLGRKHNLCGETEEERIRVDILENQLMDNRMVLARLCYNADFEKLKPGYLEQLPGMMRLYSEFLGKRPWFAGDKITFVDFIAYDVLERNQVFEAKCLDAFPNLKDFIARFEGLKKISDYMKTSRFLPRPMFTKMATWGSN.

Residues 1 to 88 (MPMTLGYWDI…YLGRKHNLCG (88 aa)) form the GST N-terminal domain. Glutathione contacts are provided by residues 7–8 (YW), 46–50 (WLNEK), 59–60 (NL), and 72–73 (QS). The 119-residue stretch at 90–208 (TEEERIRVDI…KTSRFLPRPM (119 aa)) folds into the GST C-terminal domain. Tyrosine 116 serves as a coordination point for substrate.

The protein belongs to the GST superfamily. Mu family. As to quaternary structure, homodimer.

The protein localises to the cytoplasm. The enzyme catalyses RX + glutathione = an S-substituted glutathione + a halide anion + H(+). Functionally, conjugation of reduced glutathione to a wide number of exogenous and endogenous hydrophobic electrophiles. The polypeptide is Glutathione S-transferase Mu 7 (Gstm7) (Mus musculus (Mouse)).